The following is a 77-amino-acid chain: Subtilisin-chymotrypsin inhibitor CI-1C (77 aa).

Belongs to the protease inhibitor I13 (potato type I serine protease inhibitor) family.

Inhibits both subtilisin and chymotrypsin. This Hordeum vulgare (Barley) protein is Subtilisin-chymotrypsin inhibitor CI-1C.